A 431-amino-acid chain; its full sequence is Glucose-1-phosphate adenylyltransferase (431 aa).

Alpha-D-glucose 1-phosphate contacts are provided by residues Tyr-109, Gly-175, 190–191 (EK), and Ser-208.

This sequence belongs to the bacterial/plant glucose-1-phosphate adenylyltransferase family. As to quaternary structure, homotetramer.

It catalyses the reaction alpha-D-glucose 1-phosphate + ATP + H(+) = ADP-alpha-D-glucose + diphosphate. The protein operates within glycan biosynthesis; glycogen biosynthesis. Functionally, involved in the biosynthesis of ADP-glucose, a building block required for the elongation reactions to produce glycogen. Catalyzes the reaction between ATP and alpha-D-glucose 1-phosphate (G1P) to produce pyrophosphate and ADP-Glc. The protein is Glucose-1-phosphate adenylyltransferase of Alteromonas mediterranea (strain DSM 17117 / CIP 110805 / LMG 28347 / Deep ecotype).